The sequence spans 1026 residues: SWI/SNF-related matrix-associated actin-dependent regulator of chromatin subfamily A containing DEAD/H box 1 (1026 aa).

Residue M1 is modified to N-acetylmethionine. A disordered region spans residues 1–82 (MNLFNLDRFR…DNERKASISY (82 aa)). The segment covering 7–19 (DRFRFEKRNKIEE) has biased composition (basic and acidic residues). Phosphothreonine is present on T54. A Phosphoserine modification is found at S57. A Phosphothreonine modification is found at T71. Residue K77 forms a Glycyl lysine isopeptide (Lys-Gly) (interchain with G-Cter in SUMO2) linkage. At S79 the chain carries Phosphoserine. A Glycyl lysine isopeptide (Lys-Gly) (interchain with G-Cter in SUMO2) cross-link involves residue K84. S124, S127, S132, S146, and S152 each carry phosphoserine. The CUE 1 domain occupies 157–199 (LKDAKLQTLKELFPQRSDNDLLKLIESTSTMDGAIAAALLMFG). Disordered stretches follow at residues 203–251 (GGPR…NWEK) and 302–328 (SQSE…KTKL). Phosphoserine is present on residues S211 and S214. Phosphotyrosine is present on Y217. Over residues 226–238 (QSIKKTRLDHGEE) the composition is skewed to basic and acidic residues. Residues S239 and S242 each carry the phosphoserine modification. The CUE 2 domain occupies 251-294 (KQESIVLKLQKEFPNFDKQELREVLKEHEWMYTEALESLKVFAE). Position 302 is a phosphoserine (S302). Over residues 314 to 323 (SRSQNYPKNA) the composition is skewed to polar residues. K335 is covalently cross-linked (Glycyl lysine isopeptide (Lys-Gly) (interchain with G-Cter in SUMO2)). The interval 354–373 (VVEDSEYDSGSDVGSSLDED) is disordered. A Glycyl lysine isopeptide (Lys-Gly) (interchain with G-Cter in SUMO2) cross-link involves residue K471. In terms of domain architecture, Helicase ATP-binding spans 509 to 677 (ALVHKHGLNG…MSLLNFVMPH (169 aa)). 521–529 (ADEMGLGKT) is a binding site for ATP. Positions 628–631 (DEGH) match the DEGH box motif. The short motif at 721-738 (RRVKEEVLKQLPPKKDRI) is the Nuclear localization signal element. Residue K724 forms a Glycyl lysine isopeptide (Lys-Gly) (interchain with G-Cter in SUMO2) linkage. The Helicase C-terminal domain maps to 858–1010 (VLGCILSELK…MTTVDEGDEG (153 aa)). 897-904 (YLRLDGKT) is an ATP binding site. K996 participates in a covalent cross-link: Glycyl lysine isopeptide (Lys-Gly) (interchain with G-Cter in SUMO2). The DEGD box signature appears at 1005–1008 (DEGD).

This sequence belongs to the SNF2/RAD54 helicase family. As to quaternary structure, binds to DNA preferentially in the vicinity of transcriptional start sites. Interacts with MSH2 and TRIM28. Part of a complex composed of TRIM28, HDAC1, HDAC2 and EHMT2. Interacts with PCNA. In terms of tissue distribution, isoform 1 is expressed ubiquitously. Isoform 3 is expressed mainly in skin and esophagus. Expressed in fibroblasts and keratinocytes (at protein level).

It localises to the nucleus. The protein resides in the chromosome. It carries out the reaction ATP + H2O = ADP + phosphate + H(+). Functionally, DNA helicase that possesses intrinsic ATP-dependent nucleosome-remodeling activity and is both required for DNA repair and heterochromatin organization. Promotes DNA end resection of double-strand breaks (DSBs) following DNA damage: probably acts by weakening histone DNA interactions in nucleosomes flanking DSBs. Required for the restoration of heterochromatin organization after replication. Acts at replication sites to facilitate the maintenance of heterochromatin by directing H3 and H4 histones deacetylation, H3 'Lys-9' trimethylation (H3K9me3) and restoration of silencing. This chain is SWI/SNF-related matrix-associated actin-dependent regulator of chromatin subfamily A containing DEAD/H box 1, found in Homo sapiens (Human).